The primary structure comprises 243 residues: 3-deoxy-manno-octulosonate cytidylyltransferase (243 aa).

Belongs to the KdsB family.

It localises to the cytoplasm. The catalysed reaction is 3-deoxy-alpha-D-manno-oct-2-ulosonate + CTP = CMP-3-deoxy-beta-D-manno-octulosonate + diphosphate. It participates in nucleotide-sugar biosynthesis; CMP-3-deoxy-D-manno-octulosonate biosynthesis; CMP-3-deoxy-D-manno-octulosonate from 3-deoxy-D-manno-octulosonate and CTP: step 1/1. It functions in the pathway bacterial outer membrane biogenesis; lipopolysaccharide biosynthesis. In terms of biological role, activates KDO (a required 8-carbon sugar) for incorporation into bacterial lipopolysaccharide in Gram-negative bacteria. The protein is 3-deoxy-manno-octulosonate cytidylyltransferase of Bartonella quintana (strain Toulouse) (Rochalimaea quintana).